We begin with the raw amino-acid sequence, 569 residues long: MGSTLGCHRSIPRDPSDLSHSRKFSAACNFSNILVNQERLNINTATEEELMTLPGVTRAVARSIVEYREYIGGFKKVEDLALVSGVGATKLEQVKFEICVSSKGSSAQHSPSSLRRDLLAEQQPHHLATAVPLTPRVNINTATPAQLMSVRGLSEKMALSIVDFRREHGPFRSVEDLVRMDGINAAFLDRIRHQVFAERSRPPSTHTNGGLTFTAKPHPSPTSLSLQSEDLDLPPGGPTQIISTRPSVEAFGGTRDGRPVLRLATWNLQGCSVEKANNPGVREVVCMTLLENSIKLLAVQELLDREALEKFCTELNQPTLPNIRKWKGPRGCWKAVVAEKPSSQLQKGAGYAGFLWDAAAGMELRDAGSQESSPSNGHGKLAGPSPYLGRFKVGSHDLTLVNLHLAALTLLGSENPSKNHSDGHRLASFAQTLQETLKGEKDVIILGDFGQGPDSNDYDILRKEKFHHLIPAHTFTNISTKNPQGSKSLDNIWISKSLKKVFTGHWAVVREGLTNPWIPDNWSWGGVASEHCPVLAEFYTEKDWSKKDAPRNGSGVALERSEANIKHER.

A disordered region spans residues 1-20 (MGSTLGCHRSIPRDPSDLSH). G2 is lipidated: N-myristoyl glycine. Over residues 11-20 (IPRDPSDLSH) the composition is skewed to basic and acidic residues. A phosphoserine mark is found at S16, S21, and S25. The 30-residue stretch at 38-67 (ERLNINTATEEELMTLPGVTRAVARSIVEY) folds into the HhH domain. Residues S106, S110, S160, and S173 each carry the phosphoserine modification. The segment at 200 to 225 (SRPPSTHTNGGLTFTAKPHPSPTSLS) is disordered. Polar residues predominate over residues 202–211 (PPSTHTNGGL). T265 is subject to Phosphothreonine. A Phosphoserine modification is found at S428. A disordered region spans residues 545 to 569 (SKKDAPRNGSGVALERSEANIKHER). A compositionally biased stretch (basic and acidic residues) spans 559 to 569 (ERSEANIKHER).

This Homo sapiens (Human) protein is Endonuclease/exonuclease/phosphatase family domain-containing protein 1 (EEPD1).